A 179-amino-acid polypeptide reads, in one-letter code: Large ribosomal subunit protein uL5 (179 aa).

Belongs to the universal ribosomal protein uL5 family. Part of the 50S ribosomal subunit; contacts the 5S rRNA and probably tRNA. Forms a bridge to the 30S subunit in the 70S ribosome.

This is one of the proteins that bind and probably mediate the attachment of the 5S RNA into the large ribosomal subunit, where it forms part of the central protuberance. In the 70S ribosome it contacts protein S13 of the 30S subunit (bridge B1b), connecting the 2 subunits; this bridge is implicated in subunit movement. May contact the P site tRNA; the 5S rRNA and some of its associated proteins might help stabilize positioning of ribosome-bound tRNAs. In Pyrobaculum aerophilum (strain ATCC 51768 / DSM 7523 / JCM 9630 / CIP 104966 / NBRC 100827 / IM2), this protein is Large ribosomal subunit protein uL5.